The sequence spans 29 residues: Protamine-like protein (29 aa).

Positions 1–29 (MRSFDQGSTRAPARERCRRQRPEGRSAQR) are disordered. Residues 12–29 (PARERCRRQRPEGRSAQR) are compositionally biased toward basic and acidic residues.

The polypeptide is Protamine-like protein (tpr) (Escherichia coli (strain K12)).